A 90-amino-acid chain; its full sequence is Barrier-to-autointegration factor-like protein (90 aa).

Belongs to the BAF family. Homodimer. Heterodimerizes with BANF1.

Its subcellular location is the nucleus. It is found in the cytoplasm. In terms of biological role, may play a role in BANF1 regulation and influence tissue-specific roles of BANF1. This Bos taurus (Bovine) protein is Barrier-to-autointegration factor-like protein (BANF2).